An 836-amino-acid polypeptide reads, in one-letter code: MGPRAKAVCSLFILLQVLAEPAENSDFYLPGDYLLGGLFTLHANVKGTVHLSFLQVPQCKKYEMKVLGYNLMQAMRFAVEEINNRSDLLPGVLLGYEIVDVCYISNNVQPVLYFLAREDYSLPIQEDYSHYVPRVLAVIGPDNSESTTTVAHFLSLFLLPQITYSAISDDLRDKQHFPALLRTVAGADHQIEAMVQLLLHFNWNWIIVLVSSDDYGRYNSQLLNDRLATGDICIAFQETLPMPQPDQVVTEWERQRLEAIVGKLQQSSARVVVLFSPDLILHNFFREVLRQNFTGAVWIASESWAIDPVLHNLTELRQTGTFLGVTTQSVPIPGFSEFRIRRTPVRLPEPNRTSLEATCNQECDTCQDTTASFNSILMLSGERVVYNVYSAVYAVAHALHSLLGCTQACSKEVVYPWQLLKEIWKVNFTLLGHNVFFGQQGDVLMPMEVIQWQWDLSQNPFQSIASYYPKLRQLKAIHNISWHTANNTIPVSMCSKDCHPGQRKKPVGIHSCCFECIDCLPGTFLNRTADEFDCQPCPSYEWSHRNDTSCFKRRLAFLEWHEPSTIFVVMLTILGFLSTLAIMVIFWRHLHTPVVRSAGGPMCFLMLVPLLLAYAMVPMYIGQPTFFSCLWRQTFFTLCFTICISCITVRSFQIVCIFKMARRLPRAYGYWVRCHGPYVFVASFMVLKVVIVAGNVLATTANPTARPDPDDPNIMVLSCNYRRALLFNTSLDLLLSVAGFSFAYMGKELPTNYNEAKFITLCMTFYFTSSVSLCTFMSVYDGVLVTILDLLITVLNLLGISFGYFGPKCYMVLFYPERNTQVYFSSMIQGYTMGKD.

An N-terminal signal peptide occupies residues 1–19 (MGPRAKAVCSLFILLQVLA). Residues 20–565 (EPAENSDFYL…AFLEWHEPST (546 aa)) lie on the Extracellular side of the membrane. N-linked (GlcNAc...) asparagine glycosylation is found at Asn84, Asn292, Asn312, Asn351, Asn427, Asn479, Asn486, Asn526, and Asn546. The helical transmembrane segment at 566-586 (IFVVMLTILGFLSTLAIMVIF) threads the bilayer. Topologically, residues 587 to 601 (WRHLHTPVVRSAGGP) are cytoplasmic. Residues 602–622 (MCFLMLVPLLLAYAMVPMYIG) traverse the membrane as a helical segment. Residues 623 to 634 (QPTFFSCLWRQT) are Extracellular-facing. The helical transmembrane segment at 635-655 (FFTLCFTICISCITVRSFQIV) threads the bilayer. The Cytoplasmic portion of the chain corresponds to 656-680 (CIFKMARRLPRAYGYWVRCHGPYVF). Residues 681–701 (VASFMVLKVVIVAGNVLATTA) form a helical membrane-spanning segment. The Extracellular segment spans residues 702-724 (NPTARPDPDDPNIMVLSCNYRRA). A helical transmembrane segment spans residues 725 to 745 (LLFNTSLDLLLSVAGFSFAYM). At 746–757 (GKELPTNYNEAK) the chain is on the cytoplasmic side. A helical transmembrane segment spans residues 758-778 (FITLCMTFYFTSSVSLCTFMS). Over 779 to 781 (VYD) the chain is Extracellular. The chain crosses the membrane as a helical span at residues 782–802 (GVLVTILDLLITVLNLLGISF). The Cytoplasmic portion of the chain corresponds to 803 to 836 (GYFGPKCYMVLFYPERNTQVYFSSMIQGYTMGKD).

Belongs to the G-protein coupled receptor 3 family. TAS1R subfamily. As to quaternary structure, forms heterodimers with TAS1R3.

It is found in the cell membrane. Its function is as follows. Putative taste receptor. TAS1R2/TAS1R3 recognizes diverse natural and synthetic sweeteners. The protein is Taste receptor type 1 member 2 (TAS1R2) of Canis lupus familiaris (Dog).